The following is a 121-amino-acid chain: Homeobox protein HD-6 (121 aa).

The homeobox DNA-binding region spans 28–87 (PKRSRIQLHDWQSMLLEHSFRMNPYPDRIEKYNLFLKTKIPMKNVKIWFQNRRAREKSFY).

The protein resides in the nucleus. The polypeptide is Homeobox protein HD-6 (HD-6) (Encephalitozoon cuniculi (strain GB-M1) (Microsporidian parasite)).